Consider the following 1566-residue polypeptide: Arginine-glutamic acid dipeptide repeats protein (1566 aa).

Residues 1–36 (MTADKDKDKDKEKDRDRDRDREREKRDKARESENSR) show a composition bias toward basic and acidic residues. Positions 1–90 (MTADKDKDKD…KKKSRYERTD (90 aa)) are disordered. Phosphoserine occurs at positions 53 and 56. A compositionally biased stretch (basic residues) spans 74 to 85 (KNKKKPPKKKSR). Residues 103 to 283 (VVYRPGDCVY…PETRRLNSTQ (181 aa)) enclose the BAH domain. Threonine 120 is subject to Phosphothreonine. Residues serine 142 and serine 304 each carry the phosphoserine modification. The 104-residue stretch at 284–387 (GEIRVGPSHQ…KALQRLVKKP (104 aa)) folds into the ELM2 domain. The 53-residue stretch at 391–443 (LIEKCWTEDEVKRFVKGLRQYGKNFFRIRKELLPNKETGELITFYYYWKKTPE) folds into the SANT domain. Residues 464–495 (TRTASTPVNTPSRPPSSEFLDLSSASEDDFDS) are disordered. Residues 465–474 (RTASTPVNTP) show a composition bias toward polar residues. Over residues 479-488 (SSEFLDLSSA) the composition is skewed to low complexity. The GATA-type zinc-finger motif lies at 507-532 (CRHCFTTTSKDWHHGGRENILLCTDC). The tract at residues 542-1133 (LPPIEKPVDP…PSHASQSARF (592 aa)) is disordered. Residue lysine 560 forms a Glycyl lysine isopeptide (Lys-Gly) (interchain with G-Cter in SUMO2) linkage. Residues serine 594, serine 600, and serine 613 each carry the phosphoserine modification. Residues 609-623 (SGRNSPSAASTSSND) are compositionally biased toward low complexity. Over residues 624–640 (SKAETVKKSAKKVKEEA) the composition is skewed to basic and acidic residues. Residue lysine 637 forms a Glycyl lysine isopeptide (Lys-Gly) (interchain with G-Cter in SUMO2) linkage. Serine 642, serine 656, serine 675, and serine 679 each carry phosphoserine. The segment covering 652 to 673 (EKVASDTEEADRTSSKKTKTQE) has biased composition (basic and acidic residues). Basic and acidic residues predominate over residues 688–708 (SDSRSVNDEGSSDPKDIDQDN). Positions 709-720 (RSTSPSIPSPQD) are enriched in polar residues. Residues 726–751 (DSSAQQQMLQAQPPALQAPTGVTPAP) show a composition bias toward low complexity. Residues 752 to 767 (SSAPPGTPQLPTPGPT) show a composition bias toward pro residues. Over residues 778-796 (SPTASQAPNQPQAPTAPVP) the composition is skewed to low complexity. Residues 809-827 (QRPPSPHPPPHPSPHPPLQ) show a composition bias toward pro residues. Over residues 829–840 (LTGSAGQPSAPS) the composition is skewed to polar residues. 2 stretches are compositionally biased toward low complexity: residues 843–865 (QPPLHGQGPPGPHSLQAGPLLQH) and 897–913 (SLQLPASQSALQSQQPP). Residues 914-940 (REQPLPPAPLAMPHIKPPPTTPIPQLP) show a composition bias toward pro residues. Residues 970 to 980 (KPLSSLSTHHP) are compositionally biased toward low complexity. Pro residues predominate over residues 1030–1052 (PQPPFAQHPFVPGGPPPITPPTC). Positions 1053-1085 (PSTSTPPAGPGTSAQPPCSGAAASGGSIAGGSS) are enriched in low complexity. Serine 1106, serine 1113, and serine 1115 each carry phosphoserine. A compositionally biased stretch (pro residues) spans 1106 to 1117 (SPPPPPRSPSPE). Threonine 1119 bears the Phosphothreonine mark. A coiled-coil region spans residues 1156–1211 (GSKLAKKREEAIEKAKREAEQKAREEREREKEKEKEREREREREREAERAAKASSS). Lysine 1158 bears the N6-acetyllysine mark. Residues 1162–1206 (KREEAIEKAKREAEQKAREEREREKEKEKEREREREREREAERAA) show a composition bias toward basic and acidic residues. A disordered region spans residues 1162–1246 (KREEAIEKAK…TTIAAVPPYI (85 aa)). At tyrosine 1259 the chain carries Phosphotyrosine. Serine 1266 is subject to Phosphoserine.

In terms of assembly, interacts with HDAC1. Interacts with ATN1. Interaction with ATN1 is improved when the poly-Gln region of ATN1 is extended. Interacts with FAT1. In terms of tissue distribution, widely expressed. Expressed in tumor cell lines.

Its subcellular location is the nucleus. Its function is as follows. Plays a role as a transcriptional repressor during development. May play a role in the control of cell survival. Overexpression of RERE recruits BAX to the nucleus particularly to POD and triggers caspase-3 activation, leading to cell death. This chain is Arginine-glutamic acid dipeptide repeats protein (RERE), found in Homo sapiens (Human).